A 537-amino-acid polypeptide reads, in one-letter code: MRAKQHISDLAHHCIAHGMRHLVISPGSRNAPLIRAFAASSQIECLSIVDERSAAFVALGLATELQAPVGVLCTSGTALLNYGPAIAEAYYLRAPLIVLSADRPARLVGQQDSQTICQDNLFANIVKGSYSLPEEPETVAELELSARVIAQAFSTALSPCFGPVHINIPLDEPLYGGELMAESLIALSPLQLAEPKGMSPALWQEVESAWRGAKRRMIVCGQGVADAELQALLARFAPDKTVTIIAENTANIVGPWLVDRPDAVLLACDEASRSLLAPDCLISFGGHLVAKHIKLLLREFKPAFHFRLDPAQMGIDTYQCLSAELDLAPTTFFRRLAQQVEPAAGFRDLWALPEGVAENQDDEFLVLKRLLGQLPAGSIAHLGNSMSVRHAQKLASRADLLYHSNRGVAGIDGCLSTAVGVALATDQLVLCCLGDLSFVYDSNALWNRNLPSNLRIVILNNQGGDIFRRLKGPSVSPGYQDFFVAHHPVQIGKMIEAYGVAYRRCLASEIDGFSEEFLGLQDGPLVLEVFVDPTKRD.

It belongs to the TPP enzyme family. MenD subfamily. As to quaternary structure, homodimer. Requires Mg(2+) as cofactor. The cofactor is Mn(2+). It depends on thiamine diphosphate as a cofactor.

It carries out the reaction isochorismate + 2-oxoglutarate + H(+) = 5-enolpyruvoyl-6-hydroxy-2-succinyl-cyclohex-3-ene-1-carboxylate + CO2. It functions in the pathway quinol/quinone metabolism; 1,4-dihydroxy-2-naphthoate biosynthesis; 1,4-dihydroxy-2-naphthoate from chorismate: step 2/7. Its pathway is quinol/quinone metabolism; menaquinone biosynthesis. In terms of biological role, catalyzes the thiamine diphosphate-dependent decarboxylation of 2-oxoglutarate and the subsequent addition of the resulting succinic semialdehyde-thiamine pyrophosphate anion to isochorismate to yield 2-succinyl-5-enolpyruvyl-6-hydroxy-3-cyclohexene-1-carboxylate (SEPHCHC). The chain is 2-succinyl-5-enolpyruvyl-6-hydroxy-3-cyclohexene-1-carboxylate synthase from Desulfotalea psychrophila (strain LSv54 / DSM 12343).